Reading from the N-terminus, the 471-residue chain is 6-phosphogluconate dehydrogenase, decarboxylating (471 aa).

NADP(+)-binding positions include 10 to 15 (GLAVMG), 33 to 35 (NRT), 75 to 77 (VKA), and Asn-103. Substrate-binding positions include Asn-103 and 129-131 (SGG). The active-site Proton acceptor is the Lys-183. 186–187 (HN) contacts substrate. Glu-190 serves as the catalytic Proton donor. Residues Tyr-191, Lys-263, Arg-290, Arg-449, and His-455 each contribute to the substrate site.

Belongs to the 6-phosphogluconate dehydrogenase family. Homodimer.

The catalysed reaction is 6-phospho-D-gluconate + NADP(+) = D-ribulose 5-phosphate + CO2 + NADPH. Its pathway is carbohydrate degradation; pentose phosphate pathway; D-ribulose 5-phosphate from D-glucose 6-phosphate (oxidative stage): step 3/3. Functionally, catalyzes the oxidative decarboxylation of 6-phosphogluconate to ribulose 5-phosphate and CO(2), with concomitant reduction of NADP to NADPH. This chain is 6-phosphogluconate dehydrogenase, decarboxylating (gnd), found in Synechococcus elongatus (strain ATCC 33912 / PCC 7942 / FACHB-805) (Anacystis nidulans R2).